We begin with the raw amino-acid sequence, 136 residues long: Large-conductance mechanosensitive channel (136 aa).

Transmembrane regions (helical) follow at residues 10–30 (FAMR…AAFG) and 76–96 (GVFI…FMAI).

This sequence belongs to the MscL family. In terms of assembly, homopentamer.

Its subcellular location is the cell inner membrane. Channel that opens in response to stretch forces in the membrane lipid bilayer. May participate in the regulation of osmotic pressure changes within the cell. The protein is Large-conductance mechanosensitive channel of Escherichia coli O139:H28 (strain E24377A / ETEC).